The primary structure comprises 207 residues: MVESLFPSIENTGESSRRKKPRISETAEAEIEARRVNEESLKRWKTNRVQQIYACKLVEALRRVRQRSSTTSNNETDKLVSGAAREIRDTADRVLAASARGTTRWSRAILASRVRAKLKKHRKAKKSTGNCKSRKGLTETNRIKLPAVERKLKILGRLVPGCRKVSVPNLLDEATDYIAALEMQVRAMEALAELLTAAAPRTTLTGT.

Residues 1–25 (MVESLFPSIENTGESSRRKKPRISE) are disordered. A bHLH domain is found at 132–181 (KSRKGLTETNRIKLPAVERKLKILGRLVPGCRKVSVPNLLDEATDYIAAL).

Homodimer. Interacts with PRE3.

The protein resides in the nucleus. Its function is as follows. Atypical bHLH transcription factor probably unable to bind DNA. Negatively regulates brassinosteroid signaling. The sequence is that of Transcription factor bHLH149 (BHLH149) from Arabidopsis thaliana (Mouse-ear cress).